The sequence spans 485 residues: ATP synthase subunit beta (485 aa).

The span at 1–11 (MPATETADKNT) shows a compositional bias: basic and acidic residues. A disordered region spans residues 1-20 (MPATETADKNTKSANSDTSG). 170–177 (GGAGVGKT) is a binding site for ATP.

This sequence belongs to the ATPase alpha/beta chains family. As to quaternary structure, F-type ATPases have 2 components, CF(1) - the catalytic core - and CF(0) - the membrane proton channel. CF(1) has five subunits: alpha(3), beta(3), gamma(1), delta(1), epsilon(1). CF(0) has three main subunits: a(1), b(2) and c(9-12). The alpha and beta chains form an alternating ring which encloses part of the gamma chain. CF(1) is attached to CF(0) by a central stalk formed by the gamma and epsilon chains, while a peripheral stalk is formed by the delta and b chains.

It is found in the cell membrane. The enzyme catalyses ATP + H2O + 4 H(+)(in) = ADP + phosphate + 5 H(+)(out). Its function is as follows. Produces ATP from ADP in the presence of a proton gradient across the membrane. The catalytic sites are hosted primarily by the beta subunits. This chain is ATP synthase subunit beta, found in Mycobacterium avium (strain 104).